Reading from the N-terminus, the 700-residue chain is Polyribonucleotide nucleotidyltransferase (700 aa).

Positions 491 and 497 each coordinate Mg(2+). The KH domain occupies 558–617 (PNYAVIEINPDKIRDVIGKGGATIRQLTEETGAVIDIDDAGTIRIFGENKAATKAAIAKI). Positions 627–695 (GKTYEGTVAR…NRGRIKLTMK (69 aa)) constitute an S1 motif domain.

Belongs to the polyribonucleotide nucleotidyltransferase family. In terms of assembly, component of the RNA degradosome, which is a multiprotein complex involved in RNA processing and mRNA degradation. It depends on Mg(2+) as a cofactor.

It is found in the cytoplasm. It catalyses the reaction RNA(n+1) + phosphate = RNA(n) + a ribonucleoside 5'-diphosphate. Involved in mRNA degradation. Catalyzes the phosphorolysis of single-stranded polyribonucleotides processively in the 3'- to 5'-direction. The protein is Polyribonucleotide nucleotidyltransferase of Psychrobacter arcticus (strain DSM 17307 / VKM B-2377 / 273-4).